Consider the following 313-residue polypeptide: Phosphoenolpyruvate phosphomutase (313 aa).

The segment at 1–23 (MNATERPGSDGTGSPESVGSRLK) is disordered. The Nucleophile role is filled by Asp-69.

Belongs to the isocitrate lyase/PEP mutase superfamily. PEP mutase family.

It catalyses the reaction phosphoenolpyruvate + H(+) = 3-phosphonopyruvate. Its pathway is secondary metabolite biosynthesis; bialaphos biosynthesis. Its function is as follows. Formation of a carbon-phosphorus bond by converting phosphoenolpyruvate (PEP) to phosphonopyruvate (P-Pyr). This chain is Phosphoenolpyruvate phosphomutase (ppm), found in Streptomyces viridochromogenes (strain DSM 40736 / JCM 4977 / BCRC 1201 / Tue 494).